The following is a 138-amino-acid chain: Thyrotropin subunit beta (138 aa).

An N-terminal signal peptide occupies residues 1–20; the sequence is MTALFLMSMLFGLTCGQAMS. Cystine bridges form between Cys-22–Cys-72, Cys-36–Cys-87, Cys-39–Cys-125, Cys-47–Cys-103, Cys-51–Cys-105, and Cys-108–Cys-115. N-linked (GlcNAc...) asparagine glycosylation is present at Asn-43. The propeptide occupies 133-138; sequence LVGFSV.

This sequence belongs to the glycoprotein hormones subunit beta family. In terms of assembly, heterodimer of a common alpha chain and a unique beta chain which confers biological specificity to thyrotropin, lutropin, follitropin and gonadotropin.

The protein localises to the secreted. Functionally, indispensable for the control of thyroid structure and metabolism. The sequence is that of Thyrotropin subunit beta (TSHB) from Homo sapiens (Human).